The chain runs to 376 residues: RING-H2 finger protein ATL46 (376 aa).

The chain crosses the membrane as a helical span at residues 45–65; the sequence is VLFVIVILAVLFFISGLLHLL. The segment at 143–185 adopts an RING-type; atypical zinc-finger fold; sequence CAVCLCEFSEKDKLRLLPMCSHAFHLNCIDTWLQSNSTCPLCR. Basic and acidic residues-rich tracts occupy residues 296–305 and 358–376; these read RLKPQDKESE and DLPKLPWMEEHKKLENDGR. 2 disordered regions span residues 296-320 and 341-376; these read RLKPQDKESEQTGNSSSEDNKKINT and FSSDAQRRLPSSSLNVDDLPKLPWMEEHKKLENDGR.

This sequence belongs to the RING-type zinc finger family. ATL subfamily.

The protein resides in the membrane. It catalyses the reaction S-ubiquitinyl-[E2 ubiquitin-conjugating enzyme]-L-cysteine + [acceptor protein]-L-lysine = [E2 ubiquitin-conjugating enzyme]-L-cysteine + N(6)-ubiquitinyl-[acceptor protein]-L-lysine.. It functions in the pathway protein modification; protein ubiquitination. The sequence is that of RING-H2 finger protein ATL46 (ATL46) from Arabidopsis thaliana (Mouse-ear cress).